The following is a 478-amino-acid chain: Aspartyl/glutamyl-tRNA(Asn/Gln) amidotransferase subunit B (478 aa).

The protein belongs to the GatB/GatE family. GatB subfamily. As to quaternary structure, heterotrimer of A, B and C subunits.

The catalysed reaction is L-glutamyl-tRNA(Gln) + L-glutamine + ATP + H2O = L-glutaminyl-tRNA(Gln) + L-glutamate + ADP + phosphate + H(+). It catalyses the reaction L-aspartyl-tRNA(Asn) + L-glutamine + ATP + H2O = L-asparaginyl-tRNA(Asn) + L-glutamate + ADP + phosphate + 2 H(+). Its function is as follows. Allows the formation of correctly charged Asn-tRNA(Asn) or Gln-tRNA(Gln) through the transamidation of misacylated Asp-tRNA(Asn) or Glu-tRNA(Gln) in organisms which lack either or both of asparaginyl-tRNA or glutaminyl-tRNA synthetases. The reaction takes place in the presence of glutamine and ATP through an activated phospho-Asp-tRNA(Asn) or phospho-Glu-tRNA(Gln). This is Aspartyl/glutamyl-tRNA(Asn/Gln) amidotransferase subunit B from Pseudothermotoga lettingae (strain ATCC BAA-301 / DSM 14385 / NBRC 107922 / TMO) (Thermotoga lettingae).